The following is a 1131-amino-acid chain: PolyA-specific ribonuclease subunit panl-2 (1131 aa).

A USP domain is found at 489–864 (VTMQSTHGMN…LPALLAYKKK (376 aa)). The 166-residue stretch at 909–1074 (VGLDAEFIKI…VDARYALKLY (166 aa)) folds into the Exonuclease domain. The segment covering 1104-1115 (QTSSPLVVSTTR) has biased composition (polar residues). The disordered stretch occupies residues 1104-1131 (QTSSPLVVSTTRKTPEDTNPADAAPKSV).

The protein is PolyA-specific ribonuclease subunit panl-2 of Caenorhabditis elegans.